The primary structure comprises 153 residues: Histone H2B.3 (153 aa).

Basic and acidic residues-rich tracts occupy residues 1–28 (MAPKAEKKPAAKKPAEEEPAAEKAEKAP) and 36–53 (EKRLPAGKAEKGSGEGRK). The disordered stretch occupies residues 1–61 (MAPKAEKKPA…RKAGRKKAKK (61 aa)). Residues lysine 7 and lysine 37 each carry the N6-acetyllysine modification. Lysine 149 participates in a covalent cross-link: Glycyl lysine isopeptide (Lys-Gly) (interchain with G-Cter in ubiquitin).

The protein belongs to the histone H2B family. As to quaternary structure, the nucleosome is a histone octamer containing two molecules each of H2A, H2B, H3 and H4 assembled in one H3-H4 heterotetramer and two H2A-H2B heterodimers. The octamer wraps approximately 147 bp of DNA. Can be acetylated to form H2BK6ac and H2BK33ac. Post-translationally, monoubiquitinated by BRE1 to form H2BK143ub1 and deubiquitinated by UBP26. Required for heterochromatic histone H3 di- and trimethylation at H3K4me. May give a specific tag for epigenetic transcriptional activation.

Its subcellular location is the nucleus. It localises to the chromosome. Its function is as follows. Core component of nucleosome. Nucleosomes wrap and compact DNA into chromatin, limiting DNA accessibility to the cellular machineries which require DNA as a template. Histones thereby play a central role in transcription regulation, DNA repair, DNA replication and chromosomal stability. DNA accessibility is regulated via a complex set of post-translational modifications of histones, also called histone code, and nucleosome remodeling. In Oryza sativa subsp. japonica (Rice), this protein is Histone H2B.3 (H2B.3).